We begin with the raw amino-acid sequence, 510 residues long: Hexose carrier protein HEX6 (510 aa).

Residues 1 to 22 (MAAGLAITSEGGQYNGRMTSFV) are Cytoplasmic-facing. 12 consecutive transmembrane segments (helical) span residues 23–43 (ALSC…IGVS), 83–103 (SFTS…SSVT), 118–128 (VFLAXAALGGA), 140–160 (VLLG…LSEM), 169–189 (INNG…LINY), 202–222 (ISLA…LFLP), 284–304 (LVMA…VIAF), 325–345 (IVTG…VDKL), 349–369 (ALFI…GSIM), 382–402 (GYAY…GWSW), 428–448 (AVSF…LCHF), and 451–471 (GIFF…HFLL). Topologically, residues 472 to 510 (PETKKVPIEKMDIVWRDHWFWKKIIGEEAAEENNKMEAA) are cytoplasmic.

Belongs to the major facilitator superfamily. Sugar transporter (TC 2.A.1.1) family.

The protein resides in the membrane. Active uptake of hexoses. Probable glucose/hydrogen symport. The protein is Hexose carrier protein HEX6 (HEX6) of Ricinus communis (Castor bean).